We begin with the raw amino-acid sequence, 84 residues long: Small ribosomal subunit protein uS17 (84 aa).

It belongs to the universal ribosomal protein uS17 family. In terms of assembly, part of the 30S ribosomal subunit.

In terms of biological role, one of the primary rRNA binding proteins, it binds specifically to the 5'-end of 16S ribosomal RNA. The protein is Small ribosomal subunit protein uS17 of Citrobacter koseri (strain ATCC BAA-895 / CDC 4225-83 / SGSC4696).